The chain runs to 339 residues: Deubiquitinase and deneddylase Dub2 (339 aa).

A helical membrane pass occupies residues 36 to 56 (IIIALFLIVISCGLILCAYTF). Residues histidine 203, aspartate 220, and cysteine 282 contribute to the active site.

Belongs to the peptidase C48 family.

Its subcellular location is the secreted. It is found in the host cell. The protein resides in the membrane. Effector proteins function to alter host cell physiology and promote bacterial survival in host tissues. This protease possesses deubiquitinating and deneddylating activities. In Chlamydia trachomatis serovar B (strain Jali20/OT), this protein is Deubiquitinase and deneddylase Dub2 (cdu2).